Here is a 56-residue protein sequence, read N- to C-terminus: Large ribosomal subunit protein bL33 (56 aa).

Basic and acidic residues predominate over residues 1–12; the sequence is MASKGGREKIKL. The disordered stretch occupies residues 1–27; it reads MASKGGREKIKLESTAGTGHFYTTNKN.

The protein belongs to the bacterial ribosomal protein bL33 family.

This Leptothrix cholodnii (strain ATCC 51168 / LMG 8142 / SP-6) (Leptothrix discophora (strain SP-6)) protein is Large ribosomal subunit protein bL33.